The primary structure comprises 953 residues: TPR repeat-containing protein ZIP4 (953 aa).

The TPR 1 repeat unit spans residues 129 to 162 (ASFFHRSGLAWLDLGRVDLASACFEKATPLVSAA). The disordered stretch occupies residues 248–269 (AASPSSSSPRTPPYGGATPKTP). TPR repeat units follow at residues 432–465 (HALL…VSRD) and 473–506 (ADCF…EPNI). The interval 925-953 (VSGDEPDECSQEEAPKASISGSMSQPVLV) is disordered. Residues 943–953 (ISGSMSQPVLV) are compositionally biased toward polar residues.

As to quaternary structure, interacts with HEI10 and SHOC1.

The protein resides in the nucleus. Its subcellular location is the chromosome. Required for crossover formation, complete synapsis of homologous chromosomes and bivalent formation during meiosis. Is specific to recombination events resulting in interference-sensitive crossovers (class I meiotic crossover) and works cooperatively with MER3 to promote crossovers. This is TPR repeat-containing protein ZIP4 from Oryza sativa subsp. japonica (Rice).